Here is a 417-residue protein sequence, read N- to C-terminus: 3-isopropylmalate dehydratase large subunit (417 aa).

[4Fe-4S] cluster is bound by residues cysteine 298, cysteine 358, and cysteine 361.

The protein belongs to the aconitase/IPM isomerase family. LeuC type 2 subfamily. As to quaternary structure, heterodimer of LeuC and LeuD. [4Fe-4S] cluster is required as a cofactor.

The catalysed reaction is (2R,3S)-3-isopropylmalate = (2S)-2-isopropylmalate. The protein operates within amino-acid biosynthesis; L-leucine biosynthesis; L-leucine from 3-methyl-2-oxobutanoate: step 2/4. Catalyzes the isomerization between 2-isopropylmalate and 3-isopropylmalate, via the formation of 2-isopropylmaleate. This chain is 3-isopropylmalate dehydratase large subunit, found in Thermoanaerobacter pseudethanolicus (strain ATCC 33223 / 39E) (Clostridium thermohydrosulfuricum).